Consider the following 277-residue polypeptide: Large ribosomal subunit protein uL2 (277 aa).

Disordered regions lie at residues 37–60 (KNSTAGRNNNGHITTRHKGGGHKH) and 223–265 (VVMN…KRTD). The span at 39 to 49 (STAGRNNNGHI) shows a compositional bias: polar residues. The span at 50 to 60 (TTRHKGGGHKH) shows a compositional bias: basic residues. The span at 229–244 (DHPHGGGEGRTGEARE) shows a compositional bias: basic and acidic residues.

Belongs to the universal ribosomal protein uL2 family. As to quaternary structure, part of the 50S ribosomal subunit. Forms a bridge to the 30S subunit in the 70S ribosome.

In terms of biological role, one of the primary rRNA binding proteins. Required for association of the 30S and 50S subunits to form the 70S ribosome, for tRNA binding and peptide bond formation. It has been suggested to have peptidyltransferase activity; this is somewhat controversial. Makes several contacts with the 16S rRNA in the 70S ribosome. This Neisseria meningitidis serogroup A / serotype 4A (strain DSM 15465 / Z2491) protein is Large ribosomal subunit protein uL2.